The chain runs to 543 residues: Chaperonin GroEL (543 aa).

Residues 30-33 (TLGP), Lys-51, 87-91 (DGTTT), Gly-415, and Asp-496 each bind ATP.

This sequence belongs to the chaperonin (HSP60) family. As to quaternary structure, forms a cylinder of 14 subunits composed of two heptameric rings stacked back-to-back. Interacts with the co-chaperonin GroES.

It is found in the cytoplasm. It carries out the reaction ATP + H2O + a folded polypeptide = ADP + phosphate + an unfolded polypeptide.. Its function is as follows. Together with its co-chaperonin GroES, plays an essential role in assisting protein folding. The GroEL-GroES system forms a nano-cage that allows encapsulation of the non-native substrate proteins and provides a physical environment optimized to promote and accelerate protein folding. The protein is Chaperonin GroEL of Gluconobacter oxydans (strain 621H) (Gluconobacter suboxydans).